We begin with the raw amino-acid sequence, 195 residues long: CASP-like protein 1B1 (195 aa).

Topologically, residues 1–15 are cytoplasmic; sequence MAKLALAATSGKSCK. A helical transmembrane segment spans residues 16–36; it reads ILLGLRLLAFSATLSAAIVMG. At 37 to 67 the chain is on the extracellular side; it reads LNKETETFVVGKVGNTPIKATFTAKFDHTPA. The chain crosses the membrane as a helical span at residues 68-88; sequence FVFFVVANAMVSFHNLLMIAL. The Cytoplasmic portion of the chain corresponds to 89–104; that stretch reads QIFGGKMEFTGFRLLS. Residues 105 to 125 traverse the membrane as a helical segment; sequence VAILDMLNVTLISAAANAAAF. Residues 126-154 are Extracellular-facing; sequence MAEVGKNGNKHARWDKICDRFATYCDHGA. A helical membrane pass occupies residues 155–175; that stretch reads GALIAAFAGVILMLIISAASI. Over 176 to 195 the chain is Cytoplasmic; it reads SRLAQQNKCCSTTASPSVVP.

It belongs to the Casparian strip membrane proteins (CASP) family. In terms of assembly, homodimer and heterodimers.

The protein localises to the cell membrane. This is CASP-like protein 1B1 from Arabidopsis lyrata subsp. lyrata (Lyre-leaved rock-cress).